We begin with the raw amino-acid sequence, 473 residues long: Argininosuccinate lyase (473 aa).

It belongs to the lyase 1 family. Argininosuccinate lyase subfamily.

Its subcellular location is the cytoplasm. The catalysed reaction is 2-(N(omega)-L-arginino)succinate = fumarate + L-arginine. It functions in the pathway amino-acid biosynthesis; L-arginine biosynthesis; L-arginine from L-ornithine and carbamoyl phosphate: step 3/3. This is Argininosuccinate lyase from Mycobacteroides abscessus (strain ATCC 19977 / DSM 44196 / CCUG 20993 / CIP 104536 / JCM 13569 / NCTC 13031 / TMC 1543 / L948) (Mycobacterium abscessus).